A 1137-amino-acid chain; its full sequence is 2'-5'-oligoadenylate synthase 3 (1137 aa).

Position 1 is an N-acetylmethionine (Met-1). Residues 6–341 are OAS domain 1; sequence TPAGALDKLV…GALVQPWEGP (336 aa). 2 interaction with dsRNA regions span residues 12–56 and 185–199; these read DKLV…VIRI and ELRKNFVNIRPVKLK. The linker stretch occupies residues 342-461; the sequence is GLPCAGILDL…GSQMGPDLSQ (120 aa). Residues 434-453 show a composition bias toward polar residues; the sequence is QSTASSNTPPGHSSMSTAGS. Positions 434–462 are disordered; it reads QSTASSNTPPGHSSMSTAGSQMGPDLSQI. OAS domain stretches follow at residues 462-792 and 800-1134; these read IPSK…PWDV and TPAQ…WPVK. Ser-854 lines the ATP pocket. 3 residues coordinate Mg(2+): Asp-866, Asp-868, and Asp-938. Residues Arg-997, Lys-1000, and Gln-1019 each coordinate ATP.

It belongs to the 2-5A synthase family. Monomer. The cofactor is Mg(2+).

Its subcellular location is the cytoplasm. It localises to the nucleus. It catalyses the reaction 3 ATP = 5'-triphosphoadenylyl-(2'-&gt;5')-adenylyl-(2'-&gt;5')-adenosine + 2 diphosphate. With respect to regulation, produced as a latent enzyme which is activated by dsRNA generated during the course of viral infection. Strongly activated by long dsRNAs at least 50 nucleotides in length. ssRNA does not activate the enzyme. Its function is as follows. Interferon-induced, dsRNA-activated antiviral enzyme which plays a critical role in cellular innate antiviral response. In addition, it may also play a role in other cellular processes such as apoptosis, cell growth, differentiation and gene regulation. Synthesizes preferentially dimers of 2'-5'-oligoadenylates (2-5A) from ATP which then bind to the inactive monomeric form of ribonuclease L (RNase L) leading to its dimerization and subsequent activation. Activation of RNase L leads to degradation of cellular as well as viral RNA, resulting in the inhibition of protein synthesis, thus terminating viral replication. Can mediate the antiviral effect via the classical RNase L-dependent pathway or an alternative antiviral pathway independent of RNase L. The sequence is that of 2'-5'-oligoadenylate synthase 3 (Oas3) from Rattus norvegicus (Rat).